Consider the following 938-residue polypeptide: Isoleucine--tRNA ligase (938 aa).

The 'HIGH' region signature appears at 58–68 (PYANGSIHIGH). Lys183 is subject to N6-acetyllysine. Glu561 serves as a coordination point for L-isoleucyl-5'-AMP. Residues 602-606 (KMSKS) carry the 'KMSKS' region motif. Residue Lys605 participates in ATP binding. Positions 901, 904, 921, and 924 each coordinate Zn(2+).

Belongs to the class-I aminoacyl-tRNA synthetase family. IleS type 1 subfamily. As to quaternary structure, monomer. Zn(2+) serves as cofactor.

Its subcellular location is the cytoplasm. It carries out the reaction tRNA(Ile) + L-isoleucine + ATP = L-isoleucyl-tRNA(Ile) + AMP + diphosphate. In terms of biological role, catalyzes the attachment of isoleucine to tRNA(Ile). As IleRS can inadvertently accommodate and process structurally similar amino acids such as valine, to avoid such errors it has two additional distinct tRNA(Ile)-dependent editing activities. One activity is designated as 'pretransfer' editing and involves the hydrolysis of activated Val-AMP. The other activity is designated 'posttransfer' editing and involves deacylation of mischarged Val-tRNA(Ile). The sequence is that of Isoleucine--tRNA ligase from Escherichia coli O6:K15:H31 (strain 536 / UPEC).